The following is a 168-amino-acid chain: MRRYETIFIADPDLSPENQAQLFEKATTLIDANSGVLVEFDEWGTRRLAYEIRKKPRGHYVRLDFCGDGATVQGLENAFRIDERVLKFMTVFLSENADPEALRQAIAEEKEKKAEGQAAADAAPADGDDEAPKQPAPASDDDAPKQPETEAGSDETEAAAADKSDDNA.

The interval 103-168 (RQAIAEEKEK…AAADKSDDNA (66 aa)) is disordered. The span at 106 to 115 (IAEEKEKKAE) shows a compositional bias: basic and acidic residues. Residues 116 to 125 (GQAAADAAPA) show a composition bias toward low complexity.

It belongs to the bacterial ribosomal protein bS6 family.

In terms of biological role, binds together with bS18 to 16S ribosomal RNA. The chain is Small ribosomal subunit protein bS6 from Desulfosudis oleivorans (strain DSM 6200 / JCM 39069 / Hxd3) (Desulfococcus oleovorans).